Here is a 175-residue protein sequence, read N- to C-terminus: Nucleoplasmin-3 (175 aa).

The residue at position 2 (A2) is an N-acetylalanine. Residue S16 is modified to Phosphoserine. R27 carries the omega-N-methylarginine modification. Residues S147 and S151 each carry the phosphoserine modification.

The protein belongs to the nucleoplasmin family. As to quaternary structure, interacts with NPM (via N-terminus). Forms a pentamer with NPM at a ratio 4:1 (NPM3/NPM). Two pentamers form a decamer. In terms of processing, phosphorylated. Predominantly expressed in testis.

The protein resides in the nucleus. It is found in the nucleolus. Its function is as follows. Plays a role in the regulation of diverse cellular processes such as ribosome biogenesis, chromatin remodeling or protein chaperoning. Modulates the histone chaperone function and the RNA-binding activity of nucleolar phosphoprotein B23/NPM. Efficiently mediates chromatin remodeling when included in a pentamer containing NPM3 and NPM. In Mus musculus (Mouse), this protein is Nucleoplasmin-3 (Npm3).